We begin with the raw amino-acid sequence, 597 residues long: Cytosolic phospholipase A2 gamma (597 aa).

Positions 1–597 (MELSSGVCPA…FKKSHNISKD (597 aa)) constitute a PLA2c domain. The active-site Nucleophile is the Ser83. The active-site Proton acceptor is the Asp417. The interval 576–597 (RVKDPQGSQTVEFKKSHNISKD) is disordered. A compositionally biased stretch (basic and acidic residues) spans 587–597 (EFKKSHNISKD).

In terms of tissue distribution, highly expressed in ovary, where it localizes to oocytes in preantral and antral stage follicles (at protein level). Not detected in other tissues tested.

The protein localises to the nucleus. Its subcellular location is the nucleoplasm. It localises to the nucleus envelope. It is found in the cytoplasm. The protein resides in the cell cortex. The protein localises to the cytoskeleton. Its subcellular location is the spindle. The enzyme catalyses a 1,2-diacyl-sn-glycero-3-phosphocholine + H2O = a 1-acyl-sn-glycero-3-phosphocholine + a fatty acid + H(+). It catalyses the reaction a 1-O-alkyl-2-acyl-sn-glycero-3-phosphocholine + H2O = a 1-O-alkyl-sn-glycero-3-phosphocholine + a fatty acid + H(+). It carries out the reaction 1,2-dihexadecanoyl-sn-glycero-3-phosphocholine + H2O = 1-hexadecanoyl-sn-glycero-3-phosphocholine + hexadecanoate + H(+). The catalysed reaction is 1-hexadecanoyl-2-(9Z-octadecenoyl)-sn-glycero-3-phosphocholine + H2O = 1-hexadecanoyl-sn-glycero-3-phosphocholine + (9Z)-octadecenoate + H(+). The enzyme catalyses 1-hexadecanoyl-2-(9Z,12Z-octadecadienoyl)-sn-glycero-3-phosphocholine + H2O = (9Z,12Z)-octadecadienoate + 1-hexadecanoyl-sn-glycero-3-phosphocholine + H(+). It catalyses the reaction 1-hexadecanoyl-2-(5Z,8Z,11Z,14Z-eicosatetraenoyl)-sn-glycero-3-phosphocholine + H2O = 1-hexadecanoyl-sn-glycero-3-phosphocholine + (5Z,8Z,11Z,14Z)-eicosatetraenoate + H(+). It carries out the reaction 1-O-hexadecyl-2-(5Z,8Z,11Z,14Z)-eicosatetraenoyl-sn-glycero-3-phosphocholine + H2O = 1-O-hexadecyl-sn-glycero-3-phosphocholine + (5Z,8Z,11Z,14Z)-eicosatetraenoate + H(+). The catalysed reaction is 1-hexadecanoyl-2-(5Z,8Z,11Z,14Z-eicosatetraenoyl)-sn-glycero-3-phosphocholine + H2O = 2-(5Z,8Z,11Z,14Z)-eicosatetraenoyl-sn-glycero-3-phosphocholine + hexadecanoate + H(+). The enzyme catalyses a 1-acyl-sn-glycero-3-phosphocholine + H2O = sn-glycerol 3-phosphocholine + a fatty acid + H(+). It catalyses the reaction 1-hexadecanoyl-sn-glycero-3-phosphocholine + H2O = sn-glycerol 3-phosphocholine + hexadecanoate + H(+). It carries out the reaction 2 1-hexadecanoyl-sn-glycero-3-phosphocholine = 1,2-dihexadecanoyl-sn-glycero-3-phosphocholine + sn-glycerol 3-phosphocholine. The catalysed reaction is 1-hexadecanoyl-sn-glycero-3-phosphoethanolamine + 1-hexadecanoyl-sn-glycero-3-phosphocholine = 1,2-dihexadecanoyl-sn-glycero-3-phosphoethanolamine + sn-glycerol 3-phosphocholine. The enzyme catalyses 1-hexadecanoyl-sn-glycero-3-phosphoethanolamine + 1-hexadecanoyl-sn-glycero-3-phosphocholine = sn-glycero-3-phosphoethanolamine + 1,2-dihexadecanoyl-sn-glycero-3-phosphocholine. It catalyses the reaction 2 1-hexadecanoyl-sn-glycero-3-phosphoethanolamine = 1,2-dihexadecanoyl-sn-glycero-3-phosphoethanolamine + sn-glycero-3-phosphoethanolamine. It carries out the reaction 1-O-hexadecyl-sn-glycero-3-phosphocholine + 1-hexadecanoyl-sn-glycero-3-phosphocholine = 1-O-hexadecyl-2-hexadecanoyl-sn-glycero-3-phosphocholine + sn-glycerol 3-phosphocholine. The catalysed reaction is a 1-O-(1Z-alkenyl)-sn-glycero-3-phosphoethanolamine + 1-hexadecanoyl-sn-glycero-3-phosphocholine = 1-O-(1Z)-alkenyl-2-hexadecanoyl-sn-glycero-3-phosphoethanolamine + sn-glycerol 3-phosphocholine. The enzyme catalyses 1-O-hexadecyl-sn-glycero-3-phosphocholine + 1-hexadecanoyl-sn-glycero-3-phosphoethanolamine = 1-O-hexadecyl-2-hexadecanoyl-sn-glycero-3-phosphocholine + sn-glycero-3-phosphoethanolamine. It catalyses the reaction 1-octadecanoyl-2-(5Z,8Z,11Z,14Z)-eicosatetraenoyl-sn-glycero-3-phosphoethanolamine + 1-hexadecanoyl-sn-glycero-3-phosphocholine = 1-octadecanoyl-sn-glycero-3-phosphoethanolamine + 1-hexadecanoyl-2-(5Z,8Z,11Z,14Z-eicosatetraenoyl)-sn-glycero-3-phosphocholine. It carries out the reaction 1-octadecanoyl-2-(5Z,8Z,11Z,14Z)-eicosatetraenoyl-sn-glycero-3-phosphoethanolamine + 1-O-hexadecyl-sn-glycero-3-phosphocholine = 1-octadecanoyl-sn-glycero-3-phosphoethanolamine + 1-O-hexadecyl-2-(5Z,8Z,11Z,14Z)-eicosatetraenoyl-sn-glycero-3-phosphocholine. The catalysed reaction is 1-hexadecanoyl-2-(9Z,12Z-octadecadienoyl)-sn-glycero-3-phosphocholine + a 1-O-(1Z-alkenyl)-sn-glycero-3-phosphoethanolamine = 1-O-(1Z-alkenyl)-2-(9Z,12Z-octadecadienoyl)-sn-glycero-3-phosphoethanolamine + 1-hexadecanoyl-sn-glycero-3-phosphocholine. The enzyme catalyses 1-hexadecanoyl-2-(5Z,8Z,11Z,14Z-eicosatetraenoyl)-sn-glycero-3-phosphocholine + a 1-O-(1Z-alkenyl)-sn-glycero-3-phosphoethanolamine = 1-O-(1Z)-alkenyl-2-(5Z,8Z,11Z,14Z)-eicosatetraenoyl-sn-glycero-3-phosphoethanolamine + 1-hexadecanoyl-sn-glycero-3-phosphocholine. Its function is as follows. Calcium-independent phospholipase, lysophospholipase and O-acyltransferase involved in phospholipid remodeling. Preferentially hydrolyzes the ester bond of the fatty acyl group attached at sn-2 position of phospholipids with choline and ethanolamine head groups, producing lysophospholipids that are used in deacylation-reacylation cycles. Transfers the sn-1 fatty acyl from one lysophospholipid molecule to the sn-2 position of another lysophospholipid to form diacyl, alkylacyl and alkenylacyl glycerophospholipids. Cleaves ester bonds but not alkyl or alkenyl ether bonds at the sn-1 position of lysophospholipids. Catalyzes sn-2 fatty acyl transfer from phospholipids to the sn-2 position of 1-O-alkyl or 1-O-alkenyl lysophospholipids with lower efficiency. This chain is Cytosolic phospholipase A2 gamma, found in Mus musculus (Mouse).